Consider the following 442-residue polypeptide: tRNA(Ile)-lysidine synthase (442 aa).

28–33 (SGGLDS) is a binding site for ATP.

It belongs to the tRNA(Ile)-lysidine synthase family.

It is found in the cytoplasm. It carries out the reaction cytidine(34) in tRNA(Ile2) + L-lysine + ATP = lysidine(34) in tRNA(Ile2) + AMP + diphosphate + H(+). In terms of biological role, ligates lysine onto the cytidine present at position 34 of the AUA codon-specific tRNA(Ile) that contains the anticodon CAU, in an ATP-dependent manner. Cytidine is converted to lysidine, thus changing the amino acid specificity of the tRNA from methionine to isoleucine. The sequence is that of tRNA(Ile)-lysidine synthase from Pseudomonas aeruginosa (strain ATCC 15692 / DSM 22644 / CIP 104116 / JCM 14847 / LMG 12228 / 1C / PRS 101 / PAO1).